An 839-amino-acid polypeptide reads, in one-letter code: Phosphatidylinositol-glycan-specific phospholipase D (839 aa).

A signal peptide spans 1-23 (MSAFRFWSGLLMLLGFLCPRSSP). N-linked (GlcNAc...) asparagine glycosylation is found at Asn94, Asn271, Asn292, Asn307, and Asn321. FG-GAP repeat units lie at residues 365-427 (SSPA…GLPR), 434-496 (KEAH…GQLS), 498-558 (SPNV…YSSR), 562-622 (NVEA…SPGR), 632-692 (QSWF…GSTR), 703-769 (SLLS…TVGD), and 787-839 (QYVL…LGQD). N-linked (GlcNAc...) asparagine glycosylation is found at Asn500, Asn590, and Asn658.

The protein belongs to the GPLD1 family. As to quaternary structure, monomer. Post-translationally, glycosylated.

The protein resides in the secreted. The enzyme catalyses a 6-(alpha-D-glucosaminyl)-1-(1,2-diacyl-sn-glycero-3-phospho)-1D-myo-inositol + H2O = 6-(alpha-D-glucosaminyl)-1D-myo-inositol + a 1,2-diacyl-sn-glycero-3-phosphate + H(+). Its function is as follows. This protein hydrolyzes the inositol phosphate linkage in proteins anchored by phosphatidylinositol glycans (GPI-anchor) thus releasing these proteins from the membrane. This Bos taurus (Bovine) protein is Phosphatidylinositol-glycan-specific phospholipase D (GPLD1).